A 505-amino-acid polypeptide reads, in one-letter code: MSEQNAQGADEVVDLNNEMKARREKLAALREQGIPFPNDFRRDRTSDQLHAEFDAKEAEELEALNIEVSVAGRMMTRRIMGKASFVTLQDVGGRIQLYVARDDLPEGVYNEQFKKWDLGDILGAKGKLFKTKTGELSIHCTELRLLTKALRPLPDKFHGLQDQEARYRQRYLDLISNDESRNTFKTRSKILAGIRQFMVARGFMEVETPMMQVIPGGASARPFITHHNALDLDMYLRIAPELYLKRLVVGGFERVFEINRNFRNEGISVRHNPEFTMMELYMAYADYKDLIELTESLFRTLAQDVLGTTQVPYGDEVFDFGKPFEKLTMREAIKKYRPETDMADLDNFDSAKAIAESIGIHVEKSWGLGRIVTEIFDEVAEAHLIQPTFITEYPAEVSPLARRNDVNPEITDRFEFFIGGREIGNGFSELNDAEDQAQRFLDQVNAKAAGDDEAMFYDEDYVTALEHGLPPTAGLGIGIDRMVMLFTNSHTIRDVILFPAMRPVK.

E415 and E422 together coordinate Mg(2+).

This sequence belongs to the class-II aminoacyl-tRNA synthetase family. In terms of assembly, homodimer. Requires Mg(2+) as cofactor.

The protein localises to the cytoplasm. It catalyses the reaction tRNA(Lys) + L-lysine + ATP = L-lysyl-tRNA(Lys) + AMP + diphosphate. This is Lysine--tRNA ligase (lysS) from Salmonella typhimurium (strain LT2 / SGSC1412 / ATCC 700720).